A 327-amino-acid polypeptide reads, in one-letter code: Cobalamin biosynthesis protein CobD (327 aa).

Helical transmembrane passes span 61 to 78, 80 to 102, 160 to 182, and 300 to 322; these read MWLT…GLVI, SILP…ILLA, GIVA…YKLI, and AALV…ASLV.

Belongs to the CobD/CbiB family.

It is found in the cell membrane. Its pathway is cofactor biosynthesis; adenosylcobalamin biosynthesis. Functionally, converts cobyric acid to cobinamide by the addition of aminopropanol on the F carboxylic group. The chain is Cobalamin biosynthesis protein CobD from Brucella suis biovar 1 (strain 1330).